We begin with the raw amino-acid sequence, 622 residues long: Signal recognition particle subunit SRP68 (622 aa).

A disordered region spans residues Arg576–Lys622. A compositionally biased stretch (low complexity) spans Lys585–Lys595.

Belongs to the SRP68 family. Heterodimer with srpa-72. Srpa-68/srpa-72 heterodimer formation is stabilized by the presence of 7SL RNA. Component of a signal recognition particle (SRP) complex that consists of a 7SL RNA molecule of 300 nucleotides and six protein subunits: srpa-72, srpa-68, SRP54, F37F2.2/SRP19, F25G6.8/SRP14 and ZK512.4/SRP9. Within the SRP complex, interacts (via C-terminus) with srpa-72 (via N-terminus).

The protein resides in the cytoplasm. It is found in the nucleus. The protein localises to the nucleolus. It localises to the endoplasmic reticulum. In terms of biological role, component of the signal recognition particle (SRP) complex, a ribonucleoprotein complex that mediates the cotranslational targeting of secretory and membrane proteins to the endoplasmic reticulum (ER). The SRP complex interacts with the signal sequence in nascent secretory and membrane proteins and directs them to the membrane of the ER. The SRP complex targets the ribosome-nascent chain complex to the SRP receptor (SR), which is anchored in the ER, where SR compaction and GTPase rearrangement drive cotranslational protein translocation into the ER. Binds the signal recognition particle RNA (7SL RNA), srpa-72 binds to this complex subsequently. The SRP complex possibly participates in the elongation arrest function. This chain is Signal recognition particle subunit SRP68, found in Caenorhabditis elegans.